Here is a 218-residue protein sequence, read N- to C-terminus: Ras-related protein Rab-11B (218 aa).

G2 carries the post-translational modification N-acetylglycine. R4 carries the citrulline modification. Residues S20, G21, G23, K24, S25, N26, N37, L38, S40, S42, and T43 each contribute to the GTP site. S25 is a binding site for Mg(2+). The Switch 1 signature appears at 36–47; sequence FNLESKSTIGVE. Mg(2+) is bound by residues T43 and D66. The short motif at 67-86 is the Switch 2 element; sequence TAGQERYRAITSAYYRGAVG. 6 residues coordinate GTP: G69, N124, K125, D127, A155, and L156. Residues 184–218 are disordered; it reads RAAHDESPGNNVVDISVPPTTDGQRPNKLQCCQSL. Residues C214 and C215 are each lipidated (S-geranylgeranyl cysteine). C215 carries the post-translational modification Cysteine methyl ester. The propeptide at 216–218 is removed in mature form; it reads QSL.

It belongs to the small GTPase superfamily. Rab family. Interacts with KCNMA1. Interacts with RAB11FIP1, RAB11FIP2, RAB11FIP3 and RAB11FIP4. May interact with TBC1D14. Interacts with ATP6V1E1. Interacts with PI4KB. Interacts (GDP-bound form) with ZFYVE27. Interacts (GDP-bound form) with KIF5A in a ZFYVE27-dependent manner. Interacts with RELCH. Interacts (in GTP-bound form) with TBC1D8B (via domain Rab-GAP TBC). Forms a complex containing RAB11B, ASAP1, Rabin8/RAB3IP, RAP11FIP3 and ARF4. Interacts with WDR44. It depends on Mg(2+) as a cofactor. Citrullinated by PADI4. In terms of tissue distribution, abundantly expressed in brain, heart and testis. Also detected in kidney and pancreatic islets.

It is found in the recycling endosome membrane. The protein localises to the cytoplasmic vesicle. Its subcellular location is the secretory vesicle. The protein resides in the synaptic vesicle membrane. It localises to the phagosome membrane. The catalysed reaction is GTP + H2O = GDP + phosphate + H(+). With respect to regulation, regulated by guanine nucleotide exchange factors (GEFs) which promote the exchange of bound GDP for free GTP. Regulated by GTPase activating proteins (GAPs) which increase the GTP hydrolysis activity. Inhibited by GDP dissociation inhibitors (GDIs) which prevent Rab-GDP dissociation. Its function is as follows. The small GTPases Rab are key regulators of intracellular membrane trafficking, from the formation of transport vesicles to their fusion with membranes. Rabs cycle between an inactive GDP-bound form and an active GTP-bound form that is able to recruit to membranes different set of downstream effectors directly responsible for vesicle formation, movement, tethering and fusion. The small Rab GTPase RAB11B plays a role in endocytic recycling, regulating apical recycling of several transmembrane proteins including cystic fibrosis transmembrane conductance regulator/CFTR, epithelial sodium channel/ENaC, potassium voltage-gated channel, and voltage-dependent L-type calcium channel. May also regulate constitutive and regulated secretion, like insulin granule exocytosis. Required for melanosome transport and release from melanocytes. Also regulates V-ATPase intracellular transport in response to extracellular acidosis. Promotes Rabin8/RAB3IP preciliary vesicular trafficking to mother centriole by forming a ciliary targeting complex containing Rab11, ASAP1, Rabin8/RAB3IP, RAB11FIP3 and ARF4, thereby regulating ciliogenesis initiation. On the contrary, upon LPAR1 receptor signaling pathway activation, interaction with phosphorylated WDR44 prevents Rab11-RAB3IP-RAB11FIP3 complex formation and cilia growth. This is Ras-related protein Rab-11B from Mus musculus (Mouse).